The following is a 432-amino-acid chain: E3 ubiquitin-protein ligase RNF135 (432 aa).

An RING-type zinc finger spans residues 21 to 63 (CIICQGLLDWPATLPCGHSFCRHCLEALWGARDARRWACPTCR). The segment at 95-121 (GSDPAHCPCPGSSSLSSAAARPRRRPE) is disordered. Over residues 102 to 114 (PCPGSSSLSSAAA) the composition is skewed to low complexity. 2 coiled-coil regions span residues 121-156 (ELQRVAVEKSITEVAQELTELVEHLVDIVRSLQNQR) and 191-216 (DTAAGKIRDILHDLEEIQEKLQESVT). One can recognise a B30.2/SPRY domain in the interval 241 to 432 (PDQSHPALRR…NYLIIKQVKV (192 aa)).

Homodimer. Interacts (homodimer) with RIGI (double-stranded RNA-bound oligomeric form); involved in both RIGI ubiquitination, oligomerization into filaments associated with viral RNAs and the bridging of these filaments. Interacts with UBE2D3 and UBE2N; E2 ubiquitin ligases involved in RNF135-mediated ubiquitination of RIGI and activation of the RIG-I signaling pathway. Interacts with PCBP2. Post-translationally, (Microbial infection) Cleaved and inactivated by hepatitis C virus NS3/NS4A. As to expression, expressed in skeletal muscle, spleen, kidney, placenta, prostate, stomach, thyroid and tongue. Also weakly expressed in heart, thymus, liver and lung.

The protein localises to the cytoplasm. The protein resides in the stress granule. It catalyses the reaction S-ubiquitinyl-[E2 ubiquitin-conjugating enzyme]-L-cysteine + [acceptor protein]-L-lysine = [E2 ubiquitin-conjugating enzyme]-L-cysteine + N(6)-ubiquitinyl-[acceptor protein]-L-lysine.. Its pathway is protein modification; protein ubiquitination. Functionally, E2-dependent E3 ubiquitin-protein ligase that functions as a RIGI coreceptor in the sensing of viral RNAs in cell cytoplasm and the activation of the antiviral innate immune response. Together with the UBE2D3, UBE2N and UB2V1 E2 ligases, catalyzes the 'Lys-63'-linked polyubiquitination of RIGI oligomerized on viral RNAs, an essential step in the activation of the RIG-I signaling pathway. Through a ubiquitin-independent parallel mechanism, which consists in bridging RIGI filaments forming on longer viral RNAs, further activates the RIG-I signaling pathway. This second mechanism that synergizes with the ubiquitin-dependent one would thereby allow an RNA length-dependent regulation of the RIG-I signaling pathway. Associated with the E2 ligase UBE2N, also constitutively synthesizes unanchored 'Lys-63'-linked polyubiquitin chains that may also activate the RIG-I signaling pathway. The polypeptide is E3 ubiquitin-protein ligase RNF135 (Homo sapiens (Human)).